The chain runs to 342 residues: Heat-inducible transcription repressor HrcA (342 aa).

This sequence belongs to the HrcA family.

Negative regulator of class I heat shock genes (grpE-dnaK-dnaJ and groELS operons). Prevents heat-shock induction of these operons. The chain is Heat-inducible transcription repressor HrcA from Oceanobacillus iheyensis (strain DSM 14371 / CIP 107618 / JCM 11309 / KCTC 3954 / HTE831).